Reading from the N-terminus, the 470-residue chain is Putative multidrug resistance protein MdtD (470 aa).

The Periplasmic portion of the chain corresponds to 1–11 (MTELPDNTRWQ). A helical membrane pass occupies residues 12 to 32 (LWIVAFGFFMQSLDTTIVNTA). The Cytoplasmic portion of the chain corresponds to 33–48 (LPSMAKSLGESPLHMH). The helical transmembrane segment at 49–69 (MVVVSYVLTVAVMLPASGWLA) threads the bilayer. Residues 70-76 (DKIGVRN) lie on the Periplasmic side of the membrane. A helical transmembrane segment spans residues 77-97 (IFFAAIVLFTLGSLFCALSGT). Residues 98-101 (LNQL) are Cytoplasmic-facing. A helical membrane pass occupies residues 102–124 (VLARVLQGVGGAMMVPVGRLTVM). Topologically, residues 125 to 137 (KIVPRAQYMAAMT) are periplasmic. Residues 138 to 158 (FVTLPGQIGPLLGPALGGVLV) form a helical membrane-spanning segment. At 159–164 (EYASWH) the chain is on the cytoplasmic side. A helical membrane pass occupies residues 165-185 (WIFLINIPVGIVGAMATFMLM). Residues 186 to 196 (PNYIIETRRFD) are Periplasmic-facing. A helical transmembrane segment spans residues 197-217 (LPGFLLLAIGMAVLTLALDGS). Residues 218–224 (KSMGISP) are Cytoplasmic-facing. The helical transmembrane segment at 225–245 (WTLAGLAAGGAAAILLYLFHA) threads the bilayer. Residues 246-262 (KKNSGALFSLRLFRTPT) are Periplasmic-facing. Residues 263-283 (FSLGLLGSFAGRIGSGMLPFM) traverse the membrane as a helical segment. Over 284–285 (TP) the chain is Cytoplasmic. The helical transmembrane segment at 286–306 (VFLQIGLGFSPFHAGLMMIPM) threads the bilayer. The Periplasmic portion of the chain corresponds to 307-341 (VLGSMGMKRIVVQIVNRFGYRRVLVATTLGLALVS). The chain crosses the membrane as a helical span at residues 342-362 (LLFMSVALLGWYYLLPLVLLL). Over 363-395 (QGMVNSARFSSMNTLTLKDLPDTLASSGNSLLS) the chain is Cytoplasmic. The helical transmembrane segment at 396–416 (MIMQLSMSIGVTIAGMLLGMF) threads the bilayer. Topologically, residues 417 to 430 (GQQHIGIDSSATHH) are periplasmic. The helical transmembrane segment at 431–451 (VFMYTWLCMAVIIALPAIIFA) threads the bilayer. Residues 452–470 (RVPNDTQQNMVISRRKRSL) lie on the Cytoplasmic side of the membrane.

It belongs to the major facilitator superfamily. TCR/Tet family.

It is found in the cell inner membrane. This Salmonella typhimurium (strain LT2 / SGSC1412 / ATCC 700720) protein is Putative multidrug resistance protein MdtD.